Consider the following 2102-residue polypeptide: Probable serine/threonine-protein kinase DDB_G0272282 (2102 aa).

The PX domain occupies 1–118; it reads MKYQLSILGD…NWLVPQNEPA (118 aa). The region spanning 124–222 is the PH domain; sequence NPDKSGYLIK…WIKAIELSQQ (99 aa). Residues 225–240 show a composition bias toward basic and acidic residues; sequence QDQEQYRKQEEEERQK. Disordered regions lie at residues 225–289, 302–390, 426–558, 574–665, 685–768, 804–842, 1029–1051, 1106–1224, and 1476–1514; these read QDQE…SDGS, GPNN…SDLN, EQPG…SASP, SNLP…PLPN, NNNS…NNSL, KKKE…GTLR, QQQQ…SSVN, GTPT…PQPQ, and SSKV…SSLT. Composition is skewed to low complexity over residues 256-281 and 304-327; these read STLT…LPSS and NNSN…NNHN. Residues 328–348 are compositionally biased toward basic residues; that stretch reads HYNHHNNNHNNSHHHHHHHNG. 2 stretches are compositionally biased toward low complexity: residues 353-376 and 426-437; these read SSQV…STSL and EQPGSYQQPQHQ. Over residues 438 to 450 the composition is skewed to gly residues; it reads QGGGGGGGGGGGN. Low complexity predominate over residues 466–484; the sequence is SNLSSRSNSNSSGSSSGSG. Residues 485–501 show a composition bias toward gly residues; sequence SSSGSGPIGSGGVGGGL. 2 stretches are compositionally biased toward low complexity: residues 535–558 and 587–626; these read SNSS…SASP and NANN…NNGN. Residues 627-659 are compositionally biased toward polar residues; it reads TASGSSCNTTPNLLPAPTNVSPIQNRARSSPMT. Over residues 804-824 the composition is skewed to basic and acidic residues; that stretch reads KKKEKDKEKEKDKEKEKEKEI. Positions 827–841 are enriched in polar residues; that stretch reads NISTSTTPNKKNGTL. Residues 1106–1118 show a composition bias toward polar residues; sequence GTPTTTSGDNTPL. Composition is skewed to low complexity over residues 1119-1182, 1196-1221, and 1476-1492; these read TNTA…NSSI, EQQQ…QQQP, and SSKV…SPIL. Residues 1493 to 1507 are compositionally biased toward pro residues; that stretch reads SSPPPPMKQPPPQVI. The Protein kinase domain occupies 1527–1851; the sequence is FEIIKPISRG…AYEVKTHPFF (325 aa). Residues 1533-1541 and Lys-1556 each bind ATP; that span reads ISRGAFGRV. Asp-1650 serves as the catalytic Proton acceptor. Composition is skewed to low complexity over residues 1687-1729, 1902-1999, and 2006-2052; these read NTNT…SQTN, SQPQ…NINN, and NNNS…QINN. 2 disordered regions span residues 1687–1741 and 1902–2070; these read NTNT…KNTL and SQPQ…SKIE. Positions 1852–1911 constitute an AGC-kinase C-terminal domain; the sequence is ANVNWDTLIDQEMDNIFLPKPENNYDTDYFWDRQSMYDDEAEDDFLTINQSQPQHQSQHQ.

It belongs to the protein kinase superfamily. AGC Ser/Thr protein kinase family.

The enzyme catalyses L-seryl-[protein] + ATP = O-phospho-L-seryl-[protein] + ADP + H(+). It carries out the reaction L-threonyl-[protein] + ATP = O-phospho-L-threonyl-[protein] + ADP + H(+). This is Probable serine/threonine-protein kinase DDB_G0272282 from Dictyostelium discoideum (Social amoeba).